Consider the following 142-residue polypeptide: Hemoglobin subunit alpha (142 aa).

Residues 2 to 142 form the Globin domain; that stretch reads VLSPADKTNV…VSTVLVSKYR (141 aa). S4 is subject to Phosphoserine. Position 8 is an N6-succinyllysine (K8). T9 bears the Phosphothreonine mark. K12 is modified (N6-succinyllysine). An N6-acetyllysine; alternate modification is found at K17. At K17 the chain carries N6-succinyllysine; alternate. Residue Y25 is modified to Phosphotyrosine. At S36 the chain carries Phosphoserine. N6-succinyllysine is present on K41. At S50 the chain carries Phosphoserine. H59 serves as a coordination point for O2. Residue H88 coordinates heme b. Position 103 is a phosphoserine (S103). At T109 the chain carries Phosphothreonine. Residues S125 and S132 each carry the phosphoserine modification. Residue T135 is modified to Phosphothreonine. At S139 the chain carries Phosphoserine.

The protein belongs to the globin family. As to quaternary structure, heterotetramer of two alpha chains and two beta chains. Red blood cells.

Functionally, involved in oxygen transport from the lung to the various peripheral tissues. Its function is as follows. Hemopressin acts as an antagonist peptide of the cannabinoid receptor CNR1. Hemopressin-binding efficiently blocks cannabinoid receptor CNR1 and subsequent signaling. The sequence is that of Hemoglobin subunit alpha (HBA) from Antrozous pallidus (Pallid bat).